Reading from the N-terminus, the 376-residue chain is N-acetyldiaminopimelate deacetylase (376 aa).

The active site involves D69. The active-site Proton acceptor is the E128.

The protein belongs to the peptidase M20A family. N-acetyldiaminopimelate deacetylase subfamily.

It carries out the reaction N-acetyl-(2S,6S)-2,6-diaminopimelate + H2O = (2S,6S)-2,6-diaminopimelate + acetate. The protein operates within amino-acid biosynthesis; L-lysine biosynthesis via DAP pathway; LL-2,6-diaminopimelate from (S)-tetrahydrodipicolinate (acetylase route): step 3/3. Its function is as follows. Catalyzes the conversion of N-acetyl-diaminopimelate to diaminopimelate and acetate. This Bacillus cereus (strain G9842) protein is N-acetyldiaminopimelate deacetylase.